The primary structure comprises 388 residues: Norsolorinic acid reductase A (388 aa).

D69 contributes to the NADP(+) binding site. The active-site Proton donor is Y74. H148 contributes to the substrate binding site. Residues S178–D179, Q204, G233–A243, and R300–N308 contribute to the NADP(+) site.

Belongs to the aldo/keto reductase family. Aldo/keto reductase 2 subfamily.

The protein operates within mycotoxin biosynthesis; aflatoxin biosynthesis. Its function is as follows. Norsolorinic acid reductase; part of the gene cluster that mediates the biosynthesis of aflatoxins, a group of polyketide-derived furanocoumarins, and part of the most toxic and carcinogenic compounds among the known mycotoxins. The four major aflatoxins produced by A.parasiticus are aflatoxin B1 (AFB1), aflatoxin B2 (AFB2), aflatoxin G1 (AFG1) and aflatoxin G2 (AFG2). Within the aflatoxin pathway, the norsolorinic acid reductase aflE may play a role in the conversion of norsolorinic acid (NOR) to averantin (AVN). The biosynthesis of aflatoxins begins with the norsolorinic acid synthase aflC that combines a hexanoyl starter unit produced by the fatty acid synthase aflA/aflB and 7 malonyl-CoA extender units to synthesize the precursor NOR. The second step is the conversion of NOR to averantin and requires the norsolorinic acid ketoreductase aflD, which catalyzes the dehydration of norsolorinic acid to form (1'S)-averantin. The norsolorinic acid reductases aflE and aflF may also play a role in the conversion of NOR to AVN. The cytochrome P450 monooxygenase aflG then catalyzes the hydroxylation of AVN to 5'hydroxyaverantin (HAVN). The next step is performed by the 5'-hydroxyaverantin dehydrogenase aflH that transforms HAVN to 5'-oxoaverantin (OAVN) which is further converted to averufin (AVF) by aflK that plays a dual role in the pathway, as a 5'-oxoaverantin cyclase that mediates conversion of 5'-oxoaverantin, as well as a versicolorin B synthase in a later step in the pathway. The averufin oxidase aflI catalyzes the conversion of AVF to versiconal hemiacetal acetate (VHA). VHA is then the substrate for the versiconal hemiacetal acetate esterase aflJ to yield versiconal (VAL). Versicolorin B synthase aflK then converts VAL to versicolorin B (VERB) by closing the bisfuran ring of aflatoxin which is required for DNA-binding, thus giving to aflatoxin its activity as a mutagen. Then, the activity of the versicolorin B desaturase aflL leads to versicolorin A (VERA). A branch point starts from VERB since it can also be converted to dihydrodemethylsterigmatocystin (DMDHST), probably also by aflL, VERA being a precursor for aflatoxins B1 and G1, and DMDHST for aflatoxins B2 and G2. Next, the versicolorin reductase aflM and the cytochrome P450 monooxygenase aflN are involved in conversion of VERA to demethylsterigmatocystin (DMST). AflX and aflY seem also involved in this step, through probable aflX-mediated epoxide ring-opening step following versicolorin A oxidation and aflY-mediated Baeyer-Villiger oxidation required for the formation of the xanthone ring. The methyltransferase aflO then leads to the modification of DMST to sterigmatocystin (ST), and of DMDHST to dihydrosterigmatocystin (DHST). Both ST and DHST are then substrates of the O-methyltransferase aflP to yield O-methylsterigmatocystin (OMST) and dihydro-O-methylsterigmatocystin (DHOMST), respectively. Finally OMST is converted to aflatoxins B1 and G1, and DHOMST to aflatoxins B2 and G2, via the action of several enzymes including O-methylsterigmatocystin oxidoreductase aflQ, the cytochrome P450 monooxygenase aflU, but also the NADH-dependent flavin oxidoreductase nadA which is specifically required for the synthesis of AFG1. In Aspergillus parasiticus (strain ATCC 56775 / NRRL 5862 / SRRC 143 / SU-1), this protein is Norsolorinic acid reductase A.